The primary structure comprises 370 residues: UDP-N-acetylglucosamine--N-acetylmuramyl-(pentapeptide) pyrophosphoryl-undecaprenol N-acetylglucosamine transferase (370 aa).

Residues 15–17 (TGG), Asn129, Arg170, Ser199, Ile254, and Gln299 each bind UDP-N-acetyl-alpha-D-glucosamine.

Belongs to the glycosyltransferase 28 family. MurG subfamily.

Its subcellular location is the cell inner membrane. The enzyme catalyses di-trans,octa-cis-undecaprenyl diphospho-N-acetyl-alpha-D-muramoyl-L-alanyl-D-glutamyl-meso-2,6-diaminopimeloyl-D-alanyl-D-alanine + UDP-N-acetyl-alpha-D-glucosamine = di-trans,octa-cis-undecaprenyl diphospho-[N-acetyl-alpha-D-glucosaminyl-(1-&gt;4)]-N-acetyl-alpha-D-muramoyl-L-alanyl-D-glutamyl-meso-2,6-diaminopimeloyl-D-alanyl-D-alanine + UDP + H(+). The protein operates within cell wall biogenesis; peptidoglycan biosynthesis. Functionally, cell wall formation. Catalyzes the transfer of a GlcNAc subunit on undecaprenyl-pyrophosphoryl-MurNAc-pentapeptide (lipid intermediate I) to form undecaprenyl-pyrophosphoryl-MurNAc-(pentapeptide)GlcNAc (lipid intermediate II). This is UDP-N-acetylglucosamine--N-acetylmuramyl-(pentapeptide) pyrophosphoryl-undecaprenol N-acetylglucosamine transferase from Magnetococcus marinus (strain ATCC BAA-1437 / JCM 17883 / MC-1).